The sequence spans 459 residues: Putrescine aminotransferase (459 aa).

Residues 150–151 (GT) and glutamine 274 contribute to the pyridoxal 5'-phosphate site. Position 300 is an N6-(pyridoxal phosphate)lysine (lysine 300). Threonine 332 is a binding site for pyridoxal 5'-phosphate.

It belongs to the class-III pyridoxal-phosphate-dependent aminotransferase family. Putrescine aminotransferase subfamily. Pyridoxal 5'-phosphate is required as a cofactor.

It catalyses the reaction an alkane-alpha,omega-diamine + 2-oxoglutarate = an omega-aminoaldehyde + L-glutamate. The enzyme catalyses putrescine + 2-oxoglutarate = 1-pyrroline + L-glutamate + H2O. It carries out the reaction cadaverine + 2-oxoglutarate = 5-aminopentanal + L-glutamate. Its pathway is amine and polyamine degradation; putrescine degradation; 4-aminobutanal from putrescine (transaminase route): step 1/1. Functionally, catalyzes the aminotransferase reaction from putrescine to 2-oxoglutarate, leading to glutamate and 4-aminobutanal, which spontaneously cyclizes to form 1-pyrroline. This is the first step in one of two pathways for putrescine degradation, where putrescine is converted into 4-aminobutanoate (gamma-aminobutyrate or GABA) via 4-aminobutanal. Also functions as a cadaverine transaminase in a a L-lysine degradation pathway to succinate that proceeds via cadaverine, glutarate and L-2-hydroxyglutarate. This Escherichia fergusonii (strain ATCC 35469 / DSM 13698 / CCUG 18766 / IAM 14443 / JCM 21226 / LMG 7866 / NBRC 102419 / NCTC 12128 / CDC 0568-73) protein is Putrescine aminotransferase.